A 231-amino-acid polypeptide reads, in one-letter code: MHIMEGYLPIGWCIFWAVLSAPFVIYGIWKMTKMIQEDRRVLPLMAVCGAFVFVLSALKIPSVTGSCSHPTGTGLSAAFFGPFITSVLGTIVLLFQALLLAHGGLTTLGANVFSMAIAGPFIAWLVFVGLRKTGKVGIGVAVFITAAVANLVTYTVTSLQLALVFPVEGSILNAFIAFAGIFAVTQIPLAIIEGIICALVAKYIVRVKPEILKKLGIIQDEEIAKIQGEAV.

A run of 6 helical transmembrane segments spans residues leucine 8–isoleucine 28, valine 41–proline 61, leucine 75–phenylalanine 95, leucine 108–valine 128, valine 136–valine 156, and isoleucine 176–isoleucine 196.

It belongs to the CbiM family. In terms of assembly, forms an energy-coupling factor (ECF) transporter complex composed of an ATP-binding protein (A component, CbiO), a transmembrane protein (T component, CbiQ) and 2 possible substrate-capture proteins (S components, CbiM and CbiN) of unknown stoichimetry.

It is found in the cell membrane. It participates in cofactor biosynthesis; adenosylcobalamin biosynthesis. In terms of biological role, part of the energy-coupling factor (ECF) transporter complex CbiMNOQ involved in cobalt import. This Methanocorpusculum labreanum (strain ATCC 43576 / DSM 4855 / Z) protein is Putative cobalt transport protein CbiM 2.